Consider the following 633-residue polypeptide: Probably inactive receptor-like protein kinase At2g46850 (633 aa).

The first 28 residues, 1 to 28 (MPPLFLPSSSSALFLLLLLLLTLQTLTS), serve as a signal peptide directing secretion. The Extracellular portion of the chain corresponds to 29–285 (ISLSQPQALR…IKKHNGKKLT (257 aa)). N-linked (GlcNAc...) asparagine glycans are attached at residues asparagine 45, asparagine 69, and asparagine 231. The helical transmembrane segment at 286–306 (VLAGVLAPLFILGSLLALFCL) threads the bilayer. Residues 307 to 633 (LKRPVTSHKD…SPDSIYLPKT (327 aa)) are Cytoplasmic-facing. Residues 355–633 (FQDSQKLTQG…SPDSIYLPKT (279 aa)) form the Protein kinase domain. ATP is bound by residues 361-369 (LTQGKTGTI) and lysine 384.

It belongs to the protein kinase superfamily. Ser/Thr protein kinase family.

It localises to the membrane. This Arabidopsis thaliana (Mouse-ear cress) protein is Probably inactive receptor-like protein kinase At2g46850.